The primary structure comprises 43 residues: Disintegrin CV (43 aa).

Disulfide bonds link Cys-1–Cys-10, Cys-6–Cys-29, Cys-7–Cys-34, and Cys-19–Cys-36. The region spanning 1 to 43 (CTTGPCCRQCKLKPAGTTCWRTSVSSHYCTGRSCECPSYPGNG) is the Disintegrin domain. Residues 21–23 (RTS) carry the Cell attachment site; atypical (RTS) motif.

Belongs to the disintegrin family. Short disintegrin subfamily. In terms of assembly, monomer. Expressed by the venom gland.

It localises to the secreted. Specifically interacts with the alpha-1/beta-1 integrin (ITGA1/ITGB1). Exhibits highly inhibitory effects on cell adhesion and cell migration to collagens I and IV. Also shows in vivo anti-angiogenic activity. This is Disintegrin CV from Cerastes vipera (Sahara sand viper).